A 191-amino-acid chain; its full sequence is Cell division protein SepF (191 aa).

Over residues Glu156–Gly167 the composition is skewed to polar residues. The disordered stretch occupies residues Glu156–Leu191.

The protein belongs to the SepF family. Homodimer. Interacts with FtsZ.

It localises to the cytoplasm. In terms of biological role, cell division protein that is part of the divisome complex and is recruited early to the Z-ring. Probably stimulates Z-ring formation, perhaps through the cross-linking of FtsZ protofilaments. Its function overlaps with FtsA. The sequence is that of Cell division protein SepF from Prochlorococcus marinus (strain NATL2A).